The chain runs to 290 residues: Bifunctional protein FolD 1 (290 aa).

NADP(+) contacts are provided by residues 164–166, Ile-193, and Ile-236; that span reads GRS.

It belongs to the tetrahydrofolate dehydrogenase/cyclohydrolase family. Homodimer.

It catalyses the reaction (6R)-5,10-methylene-5,6,7,8-tetrahydrofolate + NADP(+) = (6R)-5,10-methenyltetrahydrofolate + NADPH. The enzyme catalyses (6R)-5,10-methenyltetrahydrofolate + H2O = (6R)-10-formyltetrahydrofolate + H(+). The protein operates within one-carbon metabolism; tetrahydrofolate interconversion. Catalyzes the oxidation of 5,10-methylenetetrahydrofolate to 5,10-methenyltetrahydrofolate and then the hydrolysis of 5,10-methenyltetrahydrofolate to 10-formyltetrahydrofolate. In Geobacter metallireducens (strain ATCC 53774 / DSM 7210 / GS-15), this protein is Bifunctional protein FolD 1.